A 189-amino-acid polypeptide reads, in one-letter code: Lumazine protein (189 aa).

2 Lumazine-binding repeats span residues 1 to 96 (MFKG…LGKG) and 97 to 189 (ALTG…SNEW).

The cofactor is 6,7-dimethyl-8-(1-D-ribityl)lumazine.

Antenna protein that modulates the color of the bioluminescence emission of the luciferase. In the presence of LumP, luciferase emission is shifted to higher energy values (shorter wavelength). This chain is Lumazine protein (luxL), found in Photobacterium phosphoreum.